The following is a 140-amino-acid chain: T cell receptor alpha chain constant (140 aa).

One can recognise an Ig-like C1-type domain in the interval 19-107 (KSVCLFTDFD…LVEKSFETDT (89 aa)). A disulfide bond links Cys-22 and Cys-72. Residues Asn-32, Asn-66, Asn-77, and Asn-113 are each glycosylated (N-linked (GlcNAc...) asparagine). The connecting peptide stretch occupies residues 94-115 (CDVKLVEKSFETDTNLNFQNLS). Residues 116–138 (VIGFRILLLKVAGFNLLMTLRLW) traverse the membrane as a helical segment. At 139-140 (SS) the chain is on the cytoplasmic side.

In terms of assembly, alpha-beta TR is a heterodimer composed of an alpha and beta chain; disulfide-linked. The alpha-beta TR is associated with the transmembrane signaling CD3 coreceptor proteins to form the TR-CD3 (TcR or TCR). The assembly of alpha-beta TR heterodimers with CD3 occurs in the endoplasmic reticulum where a single alpha-beta TR heterodimer associates with one CD3D-CD3E heterodimer, one CD3G-CD3E heterodimer and one CD247 homodimer forming a stable octameric structure. CD3D-CD3E and CD3G-CD3E heterodimers preferentially associate with TR alpha and TR beta chains, respectively. The association of the CD247 homodimer is the last step of TcR assembly in the endoplasmic reticulum and is required for transport to the cell surface.

It localises to the cell membrane. Its function is as follows. Constant region of T cell receptor (TR) alpha chain. Alpha-beta T cell receptors are antigen specific receptors which are essential to the immune response and are present on the cell surface of T lymphocytes. Recognize peptide-major histocompatibility (MH) (pMH) complexes that are displayed by antigen presenting cells (APC), a prerequisite for efficient T cell adaptive immunity against pathogens. Binding of alpha-beta TR to pMH complex initiates TR-CD3 clustering on the cell surface and intracellular activation of LCK that phosphorylates the ITAM motifs of CD3G, CD3D, CD3E and CD247 enabling the recruitment of ZAP70. In turn, ZAP70 phosphorylates LAT, which recruits numerous signaling molecules to form the LAT signalosome. The LAT signalosome propagates signal branching to three major signaling pathways, the calcium, the mitogen-activated protein kinase (MAPK) kinase and the nuclear factor NF-kappa-B (NF-kB) pathways, leading to the mobilization of transcription factors that are critical for gene expression and essential for T cell growth and differentiation. The T cell repertoire is generated in the thymus, by V-(D)-J rearrangement. This repertoire is then shaped by intrathymic selection events to generate a peripheral T cell pool of self-MH restricted, non-autoaggressive T cells. Post-thymic interaction of alpha-beta TR with the pMH complexes shapes TR structural and functional avidity. In Homo sapiens (Human), this protein is T cell receptor alpha chain constant.